The following is a 365-amino-acid chain: tRNA-specific 2-thiouridylase MnmA (365 aa).

Residues 9–16 and M35 contribute to the ATP site; that span reads GLSGGVDS. The tract at residues 95–97 is interaction with target base in tRNA; that stretch reads NPD. The active-site Nucleophile is C100. C100 and C196 form a disulfide bridge. G124 contributes to the ATP binding site. Residues 146 to 148 are interaction with tRNA; sequence KDQ. The Cysteine persulfide intermediate role is filled by C196. The tract at residues 315 to 316 is interaction with tRNA; it reads RY.

It belongs to the MnmA/TRMU family.

It is found in the cytoplasm. It catalyses the reaction S-sulfanyl-L-cysteinyl-[protein] + uridine(34) in tRNA + AH2 + ATP = 2-thiouridine(34) in tRNA + L-cysteinyl-[protein] + A + AMP + diphosphate + H(+). Its function is as follows. Catalyzes the 2-thiolation of uridine at the wobble position (U34) of tRNA, leading to the formation of s(2)U34. The sequence is that of tRNA-specific 2-thiouridylase MnmA from Dechloromonas aromatica (strain RCB).